A 226-amino-acid chain; its full sequence is Ribosome-recycling factor, mitochondrial (226 aa).

This sequence belongs to the RRF family.

It is found in the mitochondrion. Its function is as follows. Necessary for protein synthesis in mitochondria. Functions as a ribosome recycling factor in mitochondria. This chain is Ribosome-recycling factor, mitochondrial (RRF1), found in Eremothecium gossypii (strain ATCC 10895 / CBS 109.51 / FGSC 9923 / NRRL Y-1056) (Yeast).